The sequence spans 291 residues: Sulfotransferase 1A1 (291 aa).

44–49 lines the 3'-phosphoadenylyl sulfate pocket; sequence KSGTNW. Position 102–104 (102–104) interacts with substrate; it reads KTH. His-104 (proton acceptor) is an active-site residue. 3'-phosphoadenylyl sulfate contacts are provided by residues Arg-126, Ser-134, Tyr-189, 223 to 228, and 251 to 255; these read TSFKKM and FMRKG. Ser-134 carries the post-translational modification Phosphoserine.

The protein belongs to the sulfotransferase 1 family. In terms of assembly, homodimer. In terms of tissue distribution, expressed in brain, colon, liver, and small intestine of mice colonized with B.ovatus and L.plantarum.

The protein localises to the cytoplasm. The enzyme catalyses a phenol + 3'-phosphoadenylyl sulfate = an aryl sulfate + adenosine 3',5'-bisphosphate + H(+). The catalysed reaction is 17beta-estradiol + 3'-phosphoadenylyl sulfate = 17beta-estradiol 3-sulfate + adenosine 3',5'-bisphosphate + H(+). It carries out the reaction 4-ethylphenol + 3'-phosphoadenylyl sulfate = 4-ethylphenyl sulfate + adenosine 3',5'-bisphosphate + H(+). It catalyses the reaction 4-nitrophenol + 3'-phosphoadenylyl sulfate = 4-nitrophenyl sulfate + adenosine 3',5'-bisphosphate. The enzyme catalyses dopamine + 3'-phosphoadenylyl sulfate = dopamine 3-O-sulfate + adenosine 3',5'-bisphosphate + H(+). The catalysed reaction is dopamine + 3'-phosphoadenylyl sulfate = dopamine 4-O-sulfate + adenosine 3',5'-bisphosphate + H(+). It carries out the reaction 3,3',5-triiodo-L-thyronine + 3'-phosphoadenylyl sulfate = 3,3',5-triiodo-L-thyronine sulfate + adenosine 3',5'-bisphosphate + H(+). It catalyses the reaction 3,3',5'-triiodo-L-thyronine + 3'-phosphoadenylyl sulfate = 3,3',5'-triiodo-L-thyronine sulfate + adenosine 3',5'-bisphosphate + H(+). The enzyme catalyses 3,3'-diiodo-L-thyronine + 3'-phosphoadenylyl sulfate = 3,3'-diiodo-L-thyronine sulfate + adenosine 3',5'-bisphosphate + H(+). The catalysed reaction is L-thyroxine + 3'-phosphoadenylyl sulfate = L-thyroxine sulfate + adenosine 3',5'-bisphosphate + H(+). Its function is as follows. Sulfotransferase that utilizes 3'-phospho-5'-adenylyl sulfate (PAPS) as sulfonate donor to catalyze the sulfate conjugation of a wide variety of acceptor molecules bearing a hydroxyl or an amine group. Sulfonation increases the water solubility of most compounds, and therefore their renal excretion, but it can also result in bioactivation to form active metabolites. Displays broad substrate specificity for small phenolic compounds. Plays an important role in the sulfonation of endogenous molecules such as steroid hormones. Mediates also the metabolic activation of carcinogenic N-hydroxyarylamines leading to highly reactive intermediates capable of forming DNA adducts, potentially resulting in mutagenesis. May play a role in gut microbiota-host metabolic interaction. O-sulfonates 4-ethylphenol (4-EP), a dietary tyrosine-derived metabolite produced by gut bacteria. The product 4-EPS crosses the blood-brain barrier and may negatively regulate oligodendrocyte maturation and myelination, affecting the functional connectivity of different brain regions associated with the limbic system. Catalyzes the sulfate conjugation of dopamine. Catalyzes the sulfation of T4 (L-thyroxine/3,5,3',5'-tetraiodothyronine), T3 (3,5,3'-triiodothyronine), rT3 (3,3',5'-triiodothyronine) and 3,3'-T2 (3,3'-diiodothyronine), with a substrate preference of 3,3'-T2 &gt; rT3 &gt; T3 &gt; T4. This is Sulfotransferase 1A1 (Sult1a1) from Mus musculus (Mouse).